We begin with the raw amino-acid sequence, 92 residues long: Small ribosomal subunit protein uS19 (92 aa).

This sequence belongs to the universal ribosomal protein uS19 family.

Functionally, protein S19 forms a complex with S13 that binds strongly to the 16S ribosomal RNA. This Crocosphaera subtropica (strain ATCC 51142 / BH68) (Cyanothece sp. (strain ATCC 51142)) protein is Small ribosomal subunit protein uS19.